The primary structure comprises 568 residues: Phosphoprotein (568 aa).

2 disordered regions span residues 1 to 23 and 38 to 320; these read MDQD…GGRE and SEPT…GIGE. The span at 7-20 shows a compositional bias: basic and acidic residues; that stretch reads ILKEDSEVEREAPG. Positions 33–41 are N0 binding; that stretch reads DAVLSSEPT. Over residues 50-59 the composition is skewed to polar residues; sequence LHNTINTPQG. Ser68 carries the phosphoserine; by host modification. Residues 83-101 show a composition bias toward basic and acidic residues; the sequence is RSGEESRVSGRTSKPEAEA. Ser125 carries the post-translational modification Phosphoserine; by host. Positions 150-168 are enriched in basic and acidic residues; the sequence is GIEDENREMAAHPDKRGED. Polar residues predominate over residues 191 to 206; the sequence is ASNNGRSMEPGSSHSA. Ser192, Ser249, Ser257, and Ser260 each carry phosphoserine; by host. The multimerization stretch occupies residues 344–411; sequence FESSRDASYV…SFRDTYKRFS (68 aa). Residues 364–429 are a coiled coil; the sequence is YAEMTFNVCG…LLMSNLSTLH (66 aa). Positions 412 to 445 are l protein binding; sequence EYQKEQNSLLMSNLSTLHIITDRGGKTDNTDSLT. 2 positions are modified to phosphoserine; by host: Ser447 and Ser449. The tract at residues 479–568 is interaction with the nucleocapsid (N-RNA); the sequence is DLIREDEFRD…VEEDIESLTN (90 aa). Positions 496-516 are disordered; it reads QERDTEPRASNASRLLPSKEK.

The protein belongs to the respirovirus P protein family. In terms of assembly, homotetramer. Interacts (via multimerization domain) with polymerase L; this interaction forms the polymerase complex. Interacts (via N-terminus) with N0; this interaction allows P to chaperon N0 before encapsidation and form the N-P complex. Interacts (via C-terminus) with N-RNA template; this interaction positions the polymerase on the template. In terms of processing, phosphorylated by PKC/PRKCZ, and other unknown kinases. Phosphorylation is necessary for viral transcription and replication. The N-terminus contains the majority of phosphorylated sites. Ser-249 is the major site of phosphorylation, but is not necessary for most functions.

Its function is as follows. Essential cofactor of the RNA polymerase L that plays a central role in the transcription and replication by forming the polymerase complex with RNA polymerase L and recruiting L to the genomic N-RNA template for RNA synthesis. Also plays a central role in the encapsidation of nascent RNA chains by forming the encapsidation complex with the nucleocapsid protein N (N-P complex). Acts as a chaperone for newly synthesized free N protein, so-called N0, allowing encapsidation of nascent RNA chains during replication. The nucleoprotein protein N prevents excessive phosphorylation of P, which leads to down-regulation of viral transcription/ replication. Participates, together with N, in the formation of viral factories (viroplasms), which are large inclusions in the host cytoplasm where replication takes place. Recruits host PI4KB and remodel the host endoplasmic reticulum membrane to form viral replication factories. The polypeptide is Phosphoprotein (P/V/C) (Sendai virus (strain Z) (SeV)).